The primary structure comprises 443 residues: Endoplasmic reticulum protein SC65 (443 aa).

Positions M1–A18 are cleaved as a signal peptide. The disordered stretch occupies residues S81–G102. N-linked (GlcNAc...) asparagine glycosylation occurs at N367. 3 stretches are compositionally biased toward acidic residues: residues D387–P398, A407–L419, and G431–A443. The segment at D387–A443 is disordered.

Belongs to the leprecan family. In terms of assembly, interacts with PLOD1, P3H3 and PPIB. Identified in a complex with PLOD1 and P3H3. In terms of tissue distribution, found in testis, brain, heart and at a much lower level in liver.

It localises to the endoplasmic reticulum. Part of a complex composed of PLOD1, P3H3 and P3H4 that catalyzes hydroxylation of lysine residues in collagen alpha chains and is required for normal assembly and cross-linking of collagen fibrils. Required for normal bone density and normal skin stability via its role in hydroxylation of lysine residues in collagen alpha chains and in collagen fibril assembly. The sequence is that of Endoplasmic reticulum protein SC65 from Rattus norvegicus (Rat).